A 77-amino-acid polypeptide reads, in one-letter code: NAD(P)H-quinone oxidoreductase subunit L (77 aa).

A run of 2 helical transmembrane segments spans residues 10-30 (LLIA…LPAG) and 48-68 (LVMY…SPFL).

Belongs to the complex I NdhL subunit family. NDH-1 can be composed of about 15 different subunits; different subcomplexes with different compositions have been identified which probably have different functions.

Its subcellular location is the cellular thylakoid membrane. The catalysed reaction is a plastoquinone + NADH + (n+1) H(+)(in) = a plastoquinol + NAD(+) + n H(+)(out). It catalyses the reaction a plastoquinone + NADPH + (n+1) H(+)(in) = a plastoquinol + NADP(+) + n H(+)(out). In terms of biological role, NDH-1 shuttles electrons from an unknown electron donor, via FMN and iron-sulfur (Fe-S) centers, to quinones in the respiratory and/or the photosynthetic chain. The immediate electron acceptor for the enzyme in this species is believed to be plastoquinone. Couples the redox reaction to proton translocation, and thus conserves the redox energy in a proton gradient. Cyanobacterial NDH-1 also plays a role in inorganic carbon-concentration. The chain is NAD(P)H-quinone oxidoreductase subunit L from Picosynechococcus sp. (strain ATCC 27264 / PCC 7002 / PR-6) (Agmenellum quadruplicatum).